The primary structure comprises 455 residues: Ribosomal protein uS12 methylthiotransferase RimO (455 aa).

In terms of domain architecture, MTTase N-terminal spans 21–131 (GKVGFISLGC…VVGAVHQYVP (111 aa)). The [4Fe-4S] cluster site is built by cysteine 30, cysteine 66, cysteine 95, cysteine 164, cysteine 168, and cysteine 171. In terms of domain architecture, Radical SAM core spans 150–387 (LTPRHYAYLK…MAKQAEISAA (238 aa)). A TRAM domain is found at 390-455 (QAKIGRTIDV…DEHDLWARLI (66 aa)).

The protein belongs to the methylthiotransferase family. RimO subfamily. [4Fe-4S] cluster serves as cofactor.

It is found in the cytoplasm. It carries out the reaction L-aspartate(89)-[ribosomal protein uS12]-hydrogen + (sulfur carrier)-SH + AH2 + 2 S-adenosyl-L-methionine = 3-methylsulfanyl-L-aspartate(89)-[ribosomal protein uS12]-hydrogen + (sulfur carrier)-H + 5'-deoxyadenosine + L-methionine + A + S-adenosyl-L-homocysteine + 2 H(+). In terms of biological role, catalyzes the methylthiolation of an aspartic acid residue of ribosomal protein uS12. The polypeptide is Ribosomal protein uS12 methylthiotransferase RimO (Marinobacter nauticus (strain ATCC 700491 / DSM 11845 / VT8) (Marinobacter aquaeolei)).